The following is a 190-amino-acid chain: Peptidyl-prolyl cis-trans isomerase A (190 aa).

An N-terminal signal peptide occupies residues 1 to 24 (MLKSTLAAVAAVFALSALSPAALA). The region spanning 27 to 188 (GDPHVLLTTS…KPVVILSAKV (162 aa)) is the PPIase cyclophilin-type domain.

Belongs to the cyclophilin-type PPIase family.

The protein localises to the periplasm. It catalyses the reaction [protein]-peptidylproline (omega=180) = [protein]-peptidylproline (omega=0). Its function is as follows. PPIases accelerate the folding of proteins. It catalyzes the cis-trans isomerization of proline imidic peptide bonds in oligopeptides. In Salmonella typhimurium (strain LT2 / SGSC1412 / ATCC 700720), this protein is Peptidyl-prolyl cis-trans isomerase A (ppiA).